The chain runs to 262 residues: Glycerol uptake facilitator protein (262 aa).

Over 1-7 (MNFCSKK) the chain is Cytoplasmic. The chain crosses the membrane as a helical span at residues 8–36 (KILKQCFFEFLGTGLIIFLGISSLVVSKL). At 37–41 (TNFHF) the chain is on the extracellular side. A helical membrane pass occupies residues 42 to 62 (NHCEISCIWGLGVFISICFCS). Over 63 to 65 (SVS) the chain is Cytoplasmic. Residues 66–69 (GAHL) lie within the membrane without spanning it. An NPA 1 motif is present at residues 70–72 (NPA). The segment at residues 70 to 80 (NPAITIFLFLS) is an intramembrane region (helical). Residues 81-86 (SQFNKK) lie on the Cytoplasmic side of the membrane. A helical transmembrane segment spans residues 87–110 (KVIPYILSQISGTFFFTFLIYLIF). Residues 111–145 (NNLLNSFESKYNIVRGTKKSLELASLFCVFPKENY) lie on the Extracellular side of the membrane. Residues 146-171 (NFIHDFILEILIGIIFIIILMKLSEK) traverse the membrane as a helical segment. Over 172–180 (NNLFKFYKF) the chain is Cytoplasmic. Residues 181–197 (INPFLIGTLVIIINLFL) traverse the membrane as a helical segment. The Extracellular segment spans residues 198–201 (TSYS). Residues 202–205 (NITL) lie within the membrane without spanning it. An NPA 2 motif is present at residues 206 to 208 (NPA). Residues 206–219 (NPARDLGPRIFLSL) constitute an intramembrane region (helical). The Extracellular segment spans residues 220 to 234 (IGWGKLAFTGDDNII). The chain crosses the membrane as a helical span at residues 235–259 (FPYFLIPTIAPIIGINLGGWIYILY). The Cytoplasmic segment spans residues 260-262 (IKK).

It belongs to the MIP/aquaporin (TC 1.A.8) family.

The protein resides in the cell membrane. The enzyme catalyses glycerol(in) = glycerol(out). Functionally, mediates glycerol diffusion across the cytoplasmic membrane via a pore-type mechanism. The polypeptide is Glycerol uptake facilitator protein (glpF) (Buchnera aphidicola subsp. Schizaphis graminum (strain Sg)).